Reading from the N-terminus, the 336-residue chain is Type II methyltransferase M.PvuII (336 aa).

Repeat copies occupy residues 11-113 (SNDM…IYNF) and 181-293 (SDRM…WISF). The segment at 196–215 (TPKTRPSGHDIGKSFSKDNG) is disordered. The segment covering 202-211 (SGHDIGKSFS) has biased composition (basic and acidic residues).

The protein belongs to the N(4)/N(6)-methyltransferase family. N(4) subfamily. Monomer.

It catalyses the reaction a 2'-deoxycytidine in DNA + S-adenosyl-L-methionine = an N(4)-methyl-2'-deoxycytidine in DNA + S-adenosyl-L-homocysteine + H(+). Functionally, a beta subtype methylase, recognizes the double-stranded sequence 5'-CAGCTG-3', methylates C-4 on both strands, and protects the DNA from cleavage by the PvuII endonuclease. The chain is Type II methyltransferase M.PvuII from Proteus hauseri.